The primary structure comprises 1867 residues: Probable serine/threonine-protein kinase roco8 (1867 aa).

The DEP 1 domain occupies 16-93 (SSDGLQIKDR…DDYIFYQFDN (78 aa)). Disordered regions lie at residues 96 to 115 (NNNN…TTAT) and 121 to 225 (VSTK…NSFN). The segment covering 121–223 (VSTKIGSIGK…NSNSTYNSNS (103 aa)) has biased composition (low complexity). A DEP 2 domain is found at 264–342 (GDKGLKLQKK…NNNNGGGGVM (79 aa)). 8 LRR repeats span residues 491–512 (RLDD…IINT), 515–536 (FLRI…ESIA), 540–561 (NLES…FSRL), 563–584 (LLTK…VFQL), 586–607 (NLEE…IGSL), 609–631 (SLEK…LGLL), 633–656 (RLKS…STLP), and 657–678 (LLEQ…ITSK). Positions 693-941 (GTETLSHIKL…NEIIQTLLNQ (249 aa)) constitute a Roc domain. Disordered stretches follow at residues 763–813 (QNGI…KKRP) and 942–961 (SNNN…KQSN). Residues 768 to 793 (TSSSNLNLSTGTLPPPTQLSSSTSEL) show a composition bias toward low complexity. The COR domain maps to 974-1111 (PSIYITLETN…ILYTLKNNSN (138 aa)). Positions 1163 to 1207 (SPSLSLSNSSQSVFTNPNNNNNNKSEQQQQQQQQQQQPQPISTSP) are disordered. One can recognise a Protein kinase domain in the interval 1456 to 1864 (LIYQEEIGVG…TLNEIKDSTI (409 aa)). ATP contacts are provided by residues 1462-1470 (IGVGGFSRV) and Lys-1483. The interval 1509–1546 (SNSSLSISLSSSTSSLSPPIVNNNNNNNNLNNNLNNLN) is disordered. The Proton acceptor role is filled by Asp-1721.

The protein belongs to the protein kinase superfamily. TKL Ser/Thr protein kinase family. ROCO subfamily.

The catalysed reaction is L-seryl-[protein] + ATP = O-phospho-L-seryl-[protein] + ADP + H(+). It carries out the reaction L-threonyl-[protein] + ATP = O-phospho-L-threonyl-[protein] + ADP + H(+). This Dictyostelium discoideum (Social amoeba) protein is Probable serine/threonine-protein kinase roco8 (roco8).